The sequence spans 225 residues: NAD(P)H-quinone oxidoreductase subunit K, chloroplastic (225 aa).

Cysteine 43, cysteine 44, cysteine 108, and cysteine 139 together coordinate [4Fe-4S] cluster.

The protein belongs to the complex I 20 kDa subunit family. NDH is composed of at least 16 different subunits, 5 of which are encoded in the nucleus. [4Fe-4S] cluster is required as a cofactor.

The protein localises to the plastid. It localises to the chloroplast thylakoid membrane. The catalysed reaction is a plastoquinone + NADH + (n+1) H(+)(in) = a plastoquinol + NAD(+) + n H(+)(out). The enzyme catalyses a plastoquinone + NADPH + (n+1) H(+)(in) = a plastoquinol + NADP(+) + n H(+)(out). Its function is as follows. NDH shuttles electrons from NAD(P)H:plastoquinone, via FMN and iron-sulfur (Fe-S) centers, to quinones in the photosynthetic chain and possibly in a chloroplast respiratory chain. The immediate electron acceptor for the enzyme in this species is believed to be plastoquinone. Couples the redox reaction to proton translocation, and thus conserves the redox energy in a proton gradient. In Lactuca sativa (Garden lettuce), this protein is NAD(P)H-quinone oxidoreductase subunit K, chloroplastic.